The chain runs to 1068 residues: Ubiquitin-protein ligase E3B (1068 aa).

Residue Met-1 is modified to N-acetylmethionine. In terms of domain architecture, IQ spans Arg-29–Asp-58. Ser-419 carries the post-translational modification Phosphoserine. The 367-residue stretch at Ser-702–Ser-1068 folds into the HECT domain. Cys-1036 (glycyl thioester intermediate) is an active-site residue.

In terms of tissue distribution, widely expressed.

The protein resides in the postsynaptic density. It catalyses the reaction S-ubiquitinyl-[E2 ubiquitin-conjugating enzyme]-L-cysteine + [acceptor protein]-L-lysine = [E2 ubiquitin-conjugating enzyme]-L-cysteine + N(6)-ubiquitinyl-[acceptor protein]-L-lysine.. It functions in the pathway protein modification; protein ubiquitination. E3 ubiquitin-protein ligase which accepts ubiquitin from an E2 ubiquitin-conjugating enzyme in the form of a thioester and then directly transfers the ubiquitin to targeted substrates. Ubiquitinates BCKDK and targets it for degradation, thereby regulating various metabolic processes. Involved in the positive regulation of neurite branching in hippocampal neurons and the control of neuronal spine number and morphology, through the ubiquitination of PPP3CC. The sequence is that of Ubiquitin-protein ligase E3B (UBE3B) from Homo sapiens (Human).